The chain runs to 104 residues: Complex III assembly factor LYRM7 (104 aa).

Phosphoserine is present on serine 60.

The protein belongs to the complex I LYR family. In terms of assembly, interacts with UQCRFS1.

The protein resides in the mitochondrion matrix. Its function is as follows. Assembly factor required for Rieske Fe-S protein UQCRFS1 incorporation into the cytochrome b-c1 (CIII) complex. Functions as a chaperone, binding to this subunit within the mitochondrial matrix and stabilizing it prior to its translocation and insertion into the late CIII dimeric intermediate within the mitochondrial inner membrane. In Pongo abelii (Sumatran orangutan), this protein is Complex III assembly factor LYRM7 (LYRM7).